Here is a 370-residue protein sequence, read N- to C-terminus: ADP-ribosylhydrolase ARH3 (370 aa).

Mg(2+) is bound by residues glutamate 35, aspartate 66, and aspartate 67. Aspartate 66 lines the substrate pocket. Substrate contacts are provided by residues 135 to 141 (RGSFGNG), histidine 171, leucine 225, and isoleucine 261. Mg(2+) contacts are provided by aspartate 304, aspartate 306, and threonine 307.

This sequence belongs to the ADP-ribosylglycohydrolase family. In terms of assembly, monomer. Mg(2+) serves as cofactor.

The protein resides in the nucleus. It localises to the cytoplasm. The protein localises to the chromosome. It is found in the mitochondrion matrix. The catalysed reaction is [(1''-&gt;2')-ADP-alpha-D-ribose](n) + H2O = [(1''-&gt;2')-ADP-alpha-D-ribose](n-1) + ADP-D-ribose. The enzyme catalyses 1''-O-acetyl-ADP-alpha-D-ribose + H2O = ADP-D-ribose + acetate + H(+). It catalyses the reaction O-(ADP-D-ribosyl)-L-seryl-[protein] + H2O = ADP-D-ribose + L-seryl-[protein]. It carries out the reaction alpha-NAD(+) + H2O = ADP-D-ribose + nicotinamide + H(+). With respect to regulation, the protein undergoes a dramatic conformational switch from closed to open states upon substrate-binding, which enables specific substrate recognition for the 1''-O-linkage. The glutamate flap (Glu-35) blocks substrate entrance to Mg(2+) in the unliganded closed state. In presence of substrate, Glu-35 is ejected from the active site: this closed-to-open transition significantly widens the substrate-binding channel and precisely positions the scissile 1''-O-linkage for cleavage while securing tightly 2'- and 3'-hydroxyls of ADP-ribose. In terms of biological role, ADP-ribosylhydrolase that preferentially hydrolyzes the scissile alpha-O-linkage attached to the anomeric C1'' position of ADP-ribose and acts on different substrates, such as proteins ADP-ribosylated on serine and threonine, free poly(ADP-ribose) and O-acetyl-ADP-D-ribose. Specifically acts as a serine mono-ADP-ribosylhydrolase by mediating the removal of mono-ADP-ribose attached to serine residues on proteins, thereby playing a key role in DNA damage response. Serine ADP-ribosylation of proteins constitutes the primary form of ADP-ribosylation of proteins in response to DNA damage. Does not hydrolyze ADP-ribosyl-arginine, -cysteine, -diphthamide, or -asparagine bonds. Also able to degrade protein free poly(ADP-ribose), which is synthesized in response to DNA damage: free poly(ADP-ribose) acts as a potent cell death signal and its degradation by ADPRHL2 protects cells from poly(ADP-ribose)-dependent cell death, a process named parthanatos. Also hydrolyzes free poly(ADP-ribose) in mitochondria. Specifically digests O-acetyl-ADP-D-ribose, a product of deacetylation reactions catalyzed by sirtuins. Specifically degrades 1''-O-acetyl-ADP-D-ribose isomer, rather than 2''-O-acetyl-ADP-D-ribose or 3''-O-acetyl-ADP-D-ribose isomers. The polypeptide is ADP-ribosylhydrolase ARH3 (adprs) (Danio rerio (Zebrafish)).